Reading from the N-terminus, the 183-residue chain is Hypoxanthine/guanine phosphoribosyltransferase (183 aa).

Belongs to the purine/pyrimidine phosphoribosyltransferase family. Archaeal HPRT subfamily. As to quaternary structure, homodimer.

It localises to the cytoplasm. It catalyses the reaction IMP + diphosphate = hypoxanthine + 5-phospho-alpha-D-ribose 1-diphosphate. It carries out the reaction GMP + diphosphate = guanine + 5-phospho-alpha-D-ribose 1-diphosphate. It participates in purine metabolism; IMP biosynthesis via salvage pathway; IMP from hypoxanthine: step 1/1. Functionally, catalyzes a salvage reaction resulting in the formation of IMP that is energically less costly than de novo synthesis. This chain is Hypoxanthine/guanine phosphoribosyltransferase, found in Methanothermococcus okinawensis (strain DSM 14208 / JCM 11175 / IH1).